Reading from the N-terminus, the 143-residue chain is 16 kDa calcium-binding protein (143 aa).

4 EF-hand domains span residues 2–37 (SEEKQWTEVFHAIDKDKNGFLTREEIAQCLKEVGVC), 41–71 (ADKIIKETDMNSDGKISLEEYLNALRKLPPR), 73–108 (KCVARWREVFQSIDKDGSGKVSIKELDEFLKTSGMD), and 109–143 (IDQNSLRNWMTQNDKNKDGELDYDEFLAYVRQTYK). The Ca(2+) site is built by Asp15, Asp17, Asn19, Glu26, Asp49, Asn51, Asp53, Lys55, Glu60, Asp86, Asp88, Ser90, Lys92, Glu97, Asp122, Asn124, Asp126, Glu128, and Glu133.

Found in eggs.

Its function is as follows. Calcium-binding protein. This chain is 16 kDa calcium-binding protein, found in Schistosoma mansoni (Blood fluke).